A 164-amino-acid chain; its full sequence is Transcriptional repressor NrdR (164 aa).

A zinc finger lies at 3-34 (CPKCNYHKSSVVDSRQAEDGNTIRRRRECEQC). The region spanning 49–139 (LLVIKKDGTR…VYKSFKDVDE (91 aa)) is the ATP-cone domain.

Belongs to the NrdR family. Requires Zn(2+) as cofactor.

Negatively regulates transcription of bacterial ribonucleotide reductase nrd genes and operons by binding to NrdR-boxes. The chain is Transcriptional repressor NrdR from Streptococcus pyogenes serotype M5 (strain Manfredo).